The following is a 171-amino-acid chain: Photosystem I reaction center subunit N, chloroplastic (171 aa).

A chloroplast-targeting transit peptide spans M1 to A49. The transit peptide at Q50–A86 directs the protein to the thylakoid. Position 87 is an N-acetylglycine; partial (G87).

It belongs to the psaN family. Interacts with GRF5, GRF7, GRF9 and GRF10. The transit peptide is the site of PSAN that associates with 14-3-3.

The protein resides in the plastid. The protein localises to the chloroplast thylakoid membrane. In terms of biological role, may function in mediating the binding of the antenna complexes to the PSI reaction center and core antenna. Plays an important role in docking plastocyanin to the PSI complex. Does not bind pigments. This Arabidopsis thaliana (Mouse-ear cress) protein is Photosystem I reaction center subunit N, chloroplastic (PSAN).